Reading from the N-terminus, the 311-residue chain is Methionyl-tRNA formyltransferase (311 aa).

110-113 (SLLP) serves as a coordination point for (6S)-5,6,7,8-tetrahydrofolate.

This sequence belongs to the Fmt family.

It catalyses the reaction L-methionyl-tRNA(fMet) + (6R)-10-formyltetrahydrofolate = N-formyl-L-methionyl-tRNA(fMet) + (6S)-5,6,7,8-tetrahydrofolate + H(+). Functionally, attaches a formyl group to the free amino group of methionyl-tRNA(fMet). The formyl group appears to play a dual role in the initiator identity of N-formylmethionyl-tRNA by promoting its recognition by IF2 and preventing the misappropriation of this tRNA by the elongation apparatus. In Streptococcus pyogenes serotype M1, this protein is Methionyl-tRNA formyltransferase.